The chain runs to 403 residues: uncharacterized protein (403 aa).

The N-terminal stretch at 1–26 (MYKFKTNLFLVIYFIAIFSIESSISS) is a signal peptide. At 27–381 (FNTEINSNSN…DSDNSSFGIS (355 aa)) the chain is on the extracellular side. N-linked (GlcNAc...) asparagine glycans are attached at residues Asn58, Asn90, Asn93, Asn124, Asn137, Asn371, and Asn375. A helical membrane pass occupies residues 382-402 (IQKYLNSFLNSFIIILIINII). Residue Ile403 is a topological domain, cytoplasmic.

It localises to the membrane. This is an uncharacterized protein from Dictyostelium discoideum (Social amoeba).